The chain runs to 242 residues: DNA repair protein RecO (242 aa).

Belongs to the RecO family.

Functionally, involved in DNA repair and RecF pathway recombination. This is DNA repair protein RecO from Wolbachia pipientis subsp. Culex pipiens (strain wPip).